The sequence spans 164 residues: Protein SprT (164 aa).

The SprT-like domain maps to 14–156; that stretch reads QQAETFFKRP…LCKRCRAILV (143 aa). His-69 is a Zn(2+) binding site. Glu-70 is a catalytic residue. Residue His-73 coordinates Zn(2+).

It belongs to the SprT family. The cofactor is Zn(2+).

The protein localises to the cytoplasm. The chain is Protein SprT from Pseudomonas putida (strain GB-1).